Reading from the N-terminus, the 296-residue chain is MLENLATEERNKKTIDLDKLSPKEILMVMNEEDAGVTTAIKKELSKIEKIVNGVTESFRKGGRLIYLGAGTSGRLGVLDAAECVPTFGVSKEQVIGLISGGEKAFVSAVEGAEDSLSLGKQDLEKINLVKDDFVIGIAASGRTPYVIGALDYARLIGAKTAAISCNANAEISAHADIQVEIVTGAEVLTGSTRLKAGTAQKLVLNMISTTSMVGIGKVYKNLMVDVLPTNKKLEERSKRIIMEATDVDYETASKFYEEAEKHVKVAIVMILTNSHKEEALNNLKKANGFVRNTIQK.

An SIS domain is found at 54-217; sequence VTESFRKGGR…STTSMVGIGK (164 aa). E82 acts as the Proton donor in catalysis. E113 is a catalytic residue.

This sequence belongs to the GCKR-like family. MurNAc-6-P etherase subfamily. As to quaternary structure, homodimer.

The enzyme catalyses N-acetyl-D-muramate 6-phosphate + H2O = N-acetyl-D-glucosamine 6-phosphate + (R)-lactate. Its pathway is amino-sugar metabolism; N-acetylmuramate degradation. Functionally, specifically catalyzes the cleavage of the D-lactyl ether substituent of MurNAc 6-phosphate, producing GlcNAc 6-phosphate and D-lactate. This is N-acetylmuramic acid 6-phosphate etherase from Listeria welshimeri serovar 6b (strain ATCC 35897 / DSM 20650 / CCUG 15529 / CIP 8149 / NCTC 11857 / SLCC 5334 / V8).